The following is a 335-amino-acid chain: DNA-directed RNA polymerase subunit alpha (335 aa).

Residues 1–231 are alpha N-terminal domain (alpha-NTD); the sequence is MVREKITVST…DLLIPFLHTK (231 aa). The segment at 263 to 335 is alpha C-terminal domain (alpha-CTD); that stretch reads KKMALKSIFI…FVIDLPKNKF (73 aa).

It belongs to the RNA polymerase alpha chain family. In terms of assembly, in plastids the minimal PEP RNA polymerase catalytic core is composed of four subunits: alpha, beta, beta', and beta''. When a (nuclear-encoded) sigma factor is associated with the core the holoenzyme is formed, which can initiate transcription.

It localises to the plastid. It is found in the chloroplast. It carries out the reaction RNA(n) + a ribonucleoside 5'-triphosphate = RNA(n+1) + diphosphate. DNA-dependent RNA polymerase catalyzes the transcription of DNA into RNA using the four ribonucleoside triphosphates as substrates. The polypeptide is DNA-directed RNA polymerase subunit alpha (Helianthus annuus (Common sunflower)).